A 410-amino-acid polypeptide reads, in one-letter code: Arginine deiminase (410 aa).

The active-site Amidino-cysteine intermediate is Cys400.

Belongs to the arginine deiminase family.

The protein localises to the cytoplasm. It catalyses the reaction L-arginine + H2O = L-citrulline + NH4(+). Its pathway is amino-acid degradation; L-arginine degradation via ADI pathway; carbamoyl phosphate from L-arginine: step 1/2. In Lactococcus lactis subsp. lactis (strain IL1403) (Streptococcus lactis), this protein is Arginine deiminase (arcA).